The chain runs to 295 residues: uncharacterized protein (295 aa).

An HTH araC/xylS-type domain is found at 8 to 106 (QKTINWIESH…HMPPGAYRTF (99 aa)). Positions 25 to 46 (EDIVNVSSFSKFHFHRIFQKEV) form a DNA-binding region, H-T-H motif.

Probable transcriptional regulator. This is an uncharacterized protein from Bacillus subtilis (strain 168).